We begin with the raw amino-acid sequence, 345 residues long: Dihydroorotate dehydrogenase (quinone) (345 aa).

FMN-binding positions include 65–69 (AGLDK) and threonine 89. Residue lysine 69 coordinates substrate. 114–118 (NRMGF) is a substrate binding site. Residues asparagine 142 and asparagine 175 each coordinate FMN. A substrate-binding site is contributed by asparagine 175. Serine 178 acts as the Nucleophile in catalysis. Asparagine 180 is a binding site for substrate. Lysine 220 and threonine 248 together coordinate FMN. 249-250 (NT) is a substrate binding site. FMN-binding positions include glycine 271, glycine 300, and 321–322 (YT).

The protein belongs to the dihydroorotate dehydrogenase family. Type 2 subfamily. Monomer. FMN serves as cofactor.

The protein localises to the cell membrane. The catalysed reaction is (S)-dihydroorotate + a quinone = orotate + a quinol. It functions in the pathway pyrimidine metabolism; UMP biosynthesis via de novo pathway; orotate from (S)-dihydroorotate (quinone route): step 1/1. Its function is as follows. Catalyzes the conversion of dihydroorotate to orotate with quinone as electron acceptor. The protein is Dihydroorotate dehydrogenase (quinone) of Burkholderia lata (strain ATCC 17760 / DSM 23089 / LMG 22485 / NCIMB 9086 / R18194 / 383).